The sequence spans 345 residues: uncharacterized protein (345 aa).

A domain (TBDR plug) is located at residue Met-1. A TBDR beta-barrel domain is found at Met-1–Phe-345. Positions Pro-328–Phe-345 match the TonB C-terminal box motif.

The protein belongs to the TonB-dependent receptor family.

Its subcellular location is the cell outer membrane. This is an uncharacterized protein from Haemophilus influenzae (strain ATCC 51907 / DSM 11121 / KW20 / Rd).